An 835-amino-acid chain; its full sequence is Protein translocase subunit SecA (835 aa).

ATP contacts are provided by residues Q85, 103–107 (GEGKT), and D492. Positions 819, 821, 830, and 831 each coordinate Zn(2+).

It belongs to the SecA family. As to quaternary structure, monomer and homodimer. Part of the essential Sec protein translocation apparatus which comprises SecA, SecYEG and auxiliary proteins SecDF. Other proteins may also be involved. Zn(2+) is required as a cofactor.

Its subcellular location is the cell membrane. It localises to the cytoplasm. The enzyme catalyses ATP + H2O + cellular proteinSide 1 = ADP + phosphate + cellular proteinSide 2.. Functionally, part of the Sec protein translocase complex. Interacts with the SecYEG preprotein conducting channel. Has a central role in coupling the hydrolysis of ATP to the transfer of proteins into and across the cell membrane, serving as an ATP-driven molecular motor driving the stepwise translocation of polypeptide chains across the membrane. The protein is Protein translocase subunit SecA of Clostridium botulinum (strain Okra / Type B1).